The primary structure comprises 1397 residues: DNA-directed RNA polymerase subunit beta (1397 aa).

This sequence belongs to the RNA polymerase beta chain family. As to quaternary structure, the RNAP catalytic core consists of 2 alpha, 1 beta, 1 beta' and 1 omega subunit. When a sigma factor is associated with the core the holoenzyme is formed, which can initiate transcription.

It carries out the reaction RNA(n) + a ribonucleoside 5'-triphosphate = RNA(n+1) + diphosphate. Its function is as follows. DNA-dependent RNA polymerase catalyzes the transcription of DNA into RNA using the four ribonucleoside triphosphates as substrates. This is DNA-directed RNA polymerase subunit beta from Rhodospirillum centenum (strain ATCC 51521 / SW).